A 191-amino-acid polypeptide reads, in one-letter code: MYIAIEGIDTAGKSTQIAKLQEHFSDAIITKEPGGTEAGKEIREIVLNAKIKSKKAEFLLFLADRAEHIQEVIEPNLSKMIISDRSVVSGVAYALVQGEISETAILHLNRFATGGIYPQKIFLLQLTNEELSLRLSQKKLDGIELRGIEYLLKIQDALIKASNLLNIELVLIDATKNIDSITQEILNNINI.

7 to 14 (GIDTAGKS) is a binding site for ATP.

Belongs to the thymidylate kinase family.

The enzyme catalyses dTMP + ATP = dTDP + ADP. In terms of biological role, phosphorylation of dTMP to form dTDP in both de novo and salvage pathways of dTTP synthesis. This is Thymidylate kinase from Sulfurimonas denitrificans (strain ATCC 33889 / DSM 1251) (Thiomicrospira denitrificans (strain ATCC 33889 / DSM 1251)).